Consider the following 156-residue polypeptide: Small ribosomal subunit protein bS6 (156 aa).

A disordered region spans residues 95–156; the sequence is AITETSPLAK…DRDEQSEDSE (62 aa). Over residues 117–126 the composition is skewed to basic and acidic residues; sequence RSGRDRDESG.

The protein belongs to the bacterial ribosomal protein bS6 family.

Functionally, binds together with bS18 to 16S ribosomal RNA. This Nitrosococcus oceani (strain ATCC 19707 / BCRC 17464 / JCM 30415 / NCIMB 11848 / C-107) protein is Small ribosomal subunit protein bS6.